A 336-amino-acid polypeptide reads, in one-letter code: MYYPFVRKALFQLDPERAHEFTFQQLRRITGTPFEALVRQKVPAKPVNCMGLTFKNPLGLAAGLDKDGECIDALGAMGFGSIEIGTVTPRPQPGNDKPRLFRLVDAEGLINRMGFNNLGVDNLVENVKKAHYDGVLGINIGKNKDTPVEQGKDDYLICMEKIYAYAGYIAINISSPNTPGLRTLQYGEALDDLLTAIKNKQNDLQAMHHKYVPIAVKIAPDLSEEELIQVADSLVRHNIDGVIATNTTLDRSLVQGMKNCDQTGGLSGRPLQLKSTEIIRRLSQELNGRLPIIGVGGIDSVIAAREKIAAGASLVQIYSGFIFKGPPLIKEIVTHI.

Residues 62–66 (AGLDK) and Thr86 contribute to the FMN site. Residue Lys66 participates in substrate binding. Substrate is bound at residue 111-115 (NRMGF). Asn139 and Asn172 together coordinate FMN. Asn172 lines the substrate pocket. Ser175 functions as the Nucleophile in the catalytic mechanism. A substrate-binding site is contributed by Asn177. Residues Lys217 and Thr245 each coordinate FMN. 246-247 (NT) is a binding site for substrate. FMN is bound by residues Gly268, Gly297, and 318–319 (YS).

This sequence belongs to the dihydroorotate dehydrogenase family. Type 2 subfamily. In terms of assembly, monomer. The cofactor is FMN.

Its subcellular location is the cell membrane. The catalysed reaction is (S)-dihydroorotate + a quinone = orotate + a quinol. It participates in pyrimidine metabolism; UMP biosynthesis via de novo pathway; orotate from (S)-dihydroorotate (quinone route): step 1/1. Catalyzes the conversion of dihydroorotate to orotate with quinone as electron acceptor. This chain is Dihydroorotate dehydrogenase (quinone), found in Escherichia coli O17:K52:H18 (strain UMN026 / ExPEC).